A 219-amino-acid polypeptide reads, in one-letter code: MSNEIELLQKQVSELQDLVKKQSLIISKTGERVLELQLDKQKHDVTDFDSKFSKSISKKSGSATQFDATDFATNEDLVELVKELQGELNFIEERSIRRLVNSLKKDDDDVIAPLPNADGDIPAISDGVFPKSLKEFKDIPDLKLVRLAKFYERLPPTLKEQEDFENFLEGKVEAFHINETTDEEISKELEKFSKDELDDAFNDVARYLGLSLRRGTEIW.

Phosphoserine is present on S23. Residue K137 forms a Glycyl lysine isopeptide (Lys-Gly) (interchain with G-Cter in SUMO) linkage.

Its subcellular location is the cytoplasm. This is an uncharacterized protein from Saccharomyces cerevisiae (strain ATCC 204508 / S288c) (Baker's yeast).